The following is a 297-amino-acid chain: Lipoyl synthase (297 aa).

[4Fe-4S] cluster-binding residues include cysteine 34, cysteine 39, cysteine 45, cysteine 60, cysteine 64, cysteine 67, and serine 273. The Radical SAM core domain occupies 46–262 (WNKRHATVMI…KYVAYSKGFL (217 aa)).

It belongs to the radical SAM superfamily. Lipoyl synthase family. [4Fe-4S] cluster serves as cofactor.

The protein localises to the cytoplasm. It catalyses the reaction [[Fe-S] cluster scaffold protein carrying a second [4Fe-4S](2+) cluster] + N(6)-octanoyl-L-lysyl-[protein] + 2 oxidized [2Fe-2S]-[ferredoxin] + 2 S-adenosyl-L-methionine + 4 H(+) = [[Fe-S] cluster scaffold protein] + N(6)-[(R)-dihydrolipoyl]-L-lysyl-[protein] + 4 Fe(3+) + 2 hydrogen sulfide + 2 5'-deoxyadenosine + 2 L-methionine + 2 reduced [2Fe-2S]-[ferredoxin]. It functions in the pathway protein modification; protein lipoylation via endogenous pathway; protein N(6)-(lipoyl)lysine from octanoyl-[acyl-carrier-protein]: step 2/2. Functionally, catalyzes the radical-mediated insertion of two sulfur atoms into the C-6 and C-8 positions of the octanoyl moiety bound to the lipoyl domains of lipoate-dependent enzymes, thereby converting the octanoylated domains into lipoylated derivatives. The sequence is that of Lipoyl synthase from Ehrlichia chaffeensis (strain ATCC CRL-10679 / Arkansas).